The following is a 233-amino-acid chain: Maternal B9.15 protein (233 aa).

The disordered stretch occupies residues 135 to 165 (KATSDYHSGTSSDEEPTNKEPKTIPKVSNPN).

Belongs to the BTG family.

The chain is Maternal B9.15 protein from Xenopus laevis (African clawed frog).